Reading from the N-terminus, the 124-residue chain is MRHYEIILLIHPDQSEQVPAMLERYKGLITAGGGKVHRVEDWGRRQLAYQINKLSKAHYLCVNIEAEQTVMGELEHAFKFNDAVLRHLTVQKKKAETGPSSMMKTVEREEARKAQQAEYAANNS.

The segment at 93–124 (KKAETGPSSMMKTVEREEARKAQQAEYAANNS) is disordered. A compositionally biased stretch (basic and acidic residues) spans 105–115 (TVEREEARKAQ).

It belongs to the bacterial ribosomal protein bS6 family.

Functionally, binds together with bS18 to 16S ribosomal RNA. The chain is Small ribosomal subunit protein bS6 from Variovorax paradoxus (strain S110).